Reading from the N-terminus, the 186-residue chain is Threonylcarbamoyl-AMP synthase (186 aa).

Residues isoleucine 3–glycine 186 form the YrdC-like domain.

It belongs to the SUA5 family. TsaC subfamily.

The protein resides in the cytoplasm. It catalyses the reaction L-threonine + hydrogencarbonate + ATP = L-threonylcarbamoyladenylate + diphosphate + H2O. Its function is as follows. Required for the formation of a threonylcarbamoyl group on adenosine at position 37 (t(6)A37) in tRNAs that read codons beginning with adenine. Catalyzes the conversion of L-threonine, HCO(3)(-)/CO(2) and ATP to give threonylcarbamoyl-AMP (TC-AMP) as the acyladenylate intermediate, with the release of diphosphate. The chain is Threonylcarbamoyl-AMP synthase from Buchnera aphidicola subsp. Baizongia pistaciae (strain Bp).